Reading from the N-terminus, the 609-residue chain is Cell division protein DipM (609 aa).

The signal sequence occupies residues 1 to 24; sequence MRQLWTQAAVIALTAGTLGAPAHA. The tract at residues 21-103 is disordered; the sequence is PAHASGQSGQ…PVLRATPPRT (83 aa). A compositionally biased stretch (polar residues) spans 25–38; it reads SGQSGQRFTPNFPI. A compositionally biased stretch (pro residues) spans 79-93; it reads LPPPAPVSTPAPAPQ. LysM domains lie at 121–165 and 171–215; these read QVRV…KIKG and KAYV…KLLL. 2 stretches are compositionally biased toward low complexity: residues 242–258 and 265–280; these read AEPA…AATP and PVSE…STTT. Positions 242–280 are disordered; the sequence is AEPAPATTRPATPAATPSRPVRQPVSEETSEPATTSTTT. LysM domains lie at 295 to 339 and 345 to 389; these read QVHT…KIKG and KAYS…KIAL. Residues 389–457 form a disordered region; it reads LPDGFRDKGP…AAQPITPPPS (69 aa). A compositionally biased stretch (low complexity) spans 400-429; the sequence is RTTTTTRPATPPANTYARVDSSAAAASTPS. Residues 503-603 are lytM; that stretch reads NDGLNIRAPQ…VKDKAKPVDP (101 aa).

It is found in the periplasm. Functionally, required for efficient cell division, cell polarity and normal cell morphology. Facilitates remodeling of the peptidoglycan layer and, thus, coordinated constriction of the cell envelope during the division process. Plays a critical role in maintaining proper cell envelope architecture during growth and division. Required for normal envelope invagination during cell division and to establish or maintain outer membrane connections throughout the cell envelope. May serve as a regulatory hub coordinating the activities of multiple peptidoglycan-degrading enzymes during cell constriction. Required to position SdpA and SdpB at midcell. The polypeptide is Cell division protein DipM (Caulobacter vibrioides (strain NA1000 / CB15N) (Caulobacter crescentus)).